Here is a 535-residue protein sequence, read N- to C-terminus: CTP synthase (535 aa).

Residues 1–270 are amidoligase domain; sequence MSKNTKYVFV…DRLVCEKLGL (270 aa). A CTP-binding site is contributed by S16. Residue S16 participates in UTP binding. ATP is bound at residue 17 to 22; that stretch reads SLGKGI. Y57 is an L-glutamine binding site. D74 is a binding site for ATP. Mg(2+) is bound by residues D74 and E144. Residues 151-153, 191-196, and K227 contribute to the CTP site; these read DIE and KTKPTQ. Residues 191 to 196 and K227 contribute to the UTP site; that span reads KTKPTQ. The Glutamine amidotransferase type-1 domain maps to 295–535; sequence KIALVGKYVE…GFVGAALNNK (241 aa). G357 contacts L-glutamine. The active-site Nucleophile; for glutamine hydrolysis is the C384. Residues 385 to 388, E408, and R465 each bind L-glutamine; that span reads LGMQ. Residues H510 and E512 contribute to the active site.

The protein belongs to the CTP synthase family. In terms of assembly, homotetramer.

The catalysed reaction is UTP + L-glutamine + ATP + H2O = CTP + L-glutamate + ADP + phosphate + 2 H(+). The enzyme catalyses L-glutamine + H2O = L-glutamate + NH4(+). It carries out the reaction UTP + NH4(+) + ATP = CTP + ADP + phosphate + 2 H(+). The protein operates within pyrimidine metabolism; CTP biosynthesis via de novo pathway; CTP from UDP: step 2/2. Allosterically activated by GTP, when glutamine is the substrate; GTP has no effect on the reaction when ammonia is the substrate. The allosteric effector GTP functions by stabilizing the protein conformation that binds the tetrahedral intermediate(s) formed during glutamine hydrolysis. Inhibited by the product CTP, via allosteric rather than competitive inhibition. In terms of biological role, catalyzes the ATP-dependent amination of UTP to CTP with either L-glutamine or ammonia as the source of nitrogen. Regulates intracellular CTP levels through interactions with the four ribonucleotide triphosphates. The chain is CTP synthase from Clostridium perfringens (strain ATCC 13124 / DSM 756 / JCM 1290 / NCIMB 6125 / NCTC 8237 / Type A).